Here is a 176-residue protein sequence, read N- to C-terminus: Ribosome maturation factor RimM (176 aa).

Residues 97–176 (EDEFYWRDLI…QILVDWDPDF (80 aa)) form the PRC barrel domain.

The protein belongs to the RimM family. As to quaternary structure, binds ribosomal protein uS19.

The protein resides in the cytoplasm. An accessory protein needed during the final step in the assembly of 30S ribosomal subunit, possibly for assembly of the head region. Essential for efficient processing of 16S rRNA. May be needed both before and after RbfA during the maturation of 16S rRNA. It has affinity for free ribosomal 30S subunits but not for 70S ribosomes. This chain is Ribosome maturation factor RimM, found in Shewanella loihica (strain ATCC BAA-1088 / PV-4).